We begin with the raw amino-acid sequence, 311 residues long: Aspartate carbamoyltransferase catalytic subunit (311 aa).

Carbamoyl phosphate-binding residues include R55 and T56. K85 provides a ligand contact to L-aspartate. Carbamoyl phosphate contacts are provided by R106, H135, and Q138. 2 residues coordinate L-aspartate: R168 and R230. The carbamoyl phosphate site is built by L268 and P269.

It belongs to the aspartate/ornithine carbamoyltransferase superfamily. ATCase family. Heterododecamer (2C3:3R2) of six catalytic PyrB chains organized as two trimers (C3), and six regulatory PyrI chains organized as three dimers (R2).

The catalysed reaction is carbamoyl phosphate + L-aspartate = N-carbamoyl-L-aspartate + phosphate + H(+). It participates in pyrimidine metabolism; UMP biosynthesis via de novo pathway; (S)-dihydroorotate from bicarbonate: step 2/3. Its function is as follows. Catalyzes the condensation of carbamoyl phosphate and aspartate to form carbamoyl aspartate and inorganic phosphate, the committed step in the de novo pyrimidine nucleotide biosynthesis pathway. The sequence is that of Aspartate carbamoyltransferase catalytic subunit from Yersinia enterocolitica serotype O:8 / biotype 1B (strain NCTC 13174 / 8081).